We begin with the raw amino-acid sequence, 410 residues long: Acetate kinase (410 aa).

Mg(2+) is bound at residue N7. K14 serves as a coordination point for ATP. R88 is a substrate binding site. Residue D145 is the Proton donor/acceptor of the active site. ATP-binding positions include 203–207, 278–280, and 326–330; these read HAGNG, DTR, and GIGEN. E379 contributes to the Mg(2+) binding site.

The protein belongs to the acetokinase family. Homodimer. Mg(2+) is required as a cofactor. The cofactor is Mn(2+).

It is found in the cytoplasm. The catalysed reaction is acetate + ATP = acetyl phosphate + ADP. Its pathway is metabolic intermediate biosynthesis; acetyl-CoA biosynthesis; acetyl-CoA from acetate: step 1/2. Functionally, catalyzes the formation of acetyl phosphate from acetate and ATP. Can also catalyze the reverse reaction. The protein is Acetate kinase of Chlorante-Aster yellows phytoplasma.